The sequence spans 821 residues: Glycerol-3-phosphate acyltransferase (821 aa).

Positions 310–315 (CHRSHM) match the HXXXXD motif motif.

Belongs to the GPAT/DAPAT family.

It is found in the cell membrane. It catalyses the reaction sn-glycerol 3-phosphate + an acyl-CoA = a 1-acyl-sn-glycero-3-phosphate + CoA. It functions in the pathway phospholipid metabolism; CDP-diacylglycerol biosynthesis; CDP-diacylglycerol from sn-glycerol 3-phosphate: step 1/3. The polypeptide is Glycerol-3-phosphate acyltransferase (Baumannia cicadellinicola subsp. Homalodisca coagulata).